The primary structure comprises 648 residues: Chaperone protein HtpG (648 aa).

The tract at residues 1-349 (MTTEHAAGAQ…SSDLPLNVSR (349 aa)) is a; substrate-binding. The tract at residues 350–570 (EILQESKDID…EHDVGMNLAR (221 aa)) is b. The c stretch occupies residues 571 to 648 (ILKAAGQQAP…MAMGGSAGTD (78 aa)).

This sequence belongs to the heat shock protein 90 family. In terms of assembly, homodimer.

The protein resides in the cytoplasm. Its function is as follows. Molecular chaperone. Has ATPase activity. The protein is Chaperone protein HtpG of Aromatoleum aromaticum (strain DSM 19018 / LMG 30748 / EbN1) (Azoarcus sp. (strain EbN1)).